Here is an 813-residue protein sequence, read N- to C-terminus: Histone acetyltransferase KAT2B (813 aa).

2 disordered regions span residues 1 to 55 (MAEA…GGSA) and 380 to 423 (NSTS…EAKR). The segment covering 32–46 (ASCGPATAVAAAGTA) has biased composition (low complexity). Over residues 380 to 391 (NSTSHEQINGGR) the composition is skewed to polar residues. A compositionally biased stretch (basic and acidic residues) spans 406–423 (PGEKRKMNNSHAPEEAKR). In terms of domain architecture, N-acetyltransferase spans 484 to 632 (LNQKPNKKIL…GATLMGCELN (149 aa)). The Proton donor/acceptor role is filled by Glu-551. Acetyl-CoA-binding positions include 555 to 557 (CAV), 562 to 568 (QVKGYGT), and 593 to 596 (YAIG). The 105-residue stretch at 704–808 (KDPEQLYSTL…KFFFSKIKEA (105 aa)) folds into the Bromo domain.

The protein belongs to the acetyltransferase family. GCN5 subfamily. In terms of assembly, interacts with BCAS3. Interacts with SIRT1. Interacts with EP300, CREBBP and DDX17. Component of a large chromatin remodeling complex, at least composed of MYSM1, KAT2B/PCAF, RBM10 and KIF11/TRIP5. Interacts with KLF1; the interaction does not acetylate KLF1 and there is no enhancement of its transactivational activity. Interacts with NFE4. Interacts with MECOM. Interacts with NR2C2 (hypophosphorylated and unsumoylated form); the interaction promotes the transactivation activity of NR2C2. Interacts with NFE4. Interacts with MECOM. Interacts with E2F1; the interaction acetylates E2F1 augmenting its DNA-binding and transcriptional activity. Interacts with NPAS2, BMAL1 and CLOCK. Interacts (unsumoylated form) with NR2C1; the interaction promotes transactivation activity. Interacts with CEBPB. Interacts with NR4A3. Interacts with TBX5. Interacts with PLK4. Interacts with RB1; this interaction leads to RB1 acetylation. Interacts with VRK1.

The protein resides in the nucleus. Its subcellular location is the cytoplasm. It localises to the cytoskeleton. The protein localises to the microtubule organizing center. It is found in the centrosome. The enzyme catalyses L-lysyl-[histone] + acetyl-CoA = N(6)-acetyl-L-lysyl-[histone] + CoA + H(+). It catalyses the reaction L-lysyl-[protein] + acetyl-CoA = N(6)-acetyl-L-lysyl-[protein] + CoA + H(+). The catalysed reaction is spermidine + acetyl-CoA = N(8)-acetylspermidine + CoA + H(+). Its function is as follows. Functions as a histone acetyltransferase (HAT) to promote transcriptional activation. Has significant histone acetyltransferase activity with core histones (H3 and H4), and also with nucleosome core particles. Has a a strong preference for acetylation of H3 at 'Lys-9' (H3K9ac). Also acetylates non-histone proteins, such as ACLY, MAPRE1/EB1, PLK4, RRP9/U3-55K and TBX5. Acts as a circadian transcriptional coactivator which enhances the activity of the circadian transcriptional activators: NPAS2-BMAL1 and CLOCK-BMAL1 heterodimers. Involved in heart and limb development by mediating acetylation of TBX5, acetylation regulating nucleocytoplasmic shuttling of TBX5. Acts as a negative regulator of centrosome amplification by mediating acetylation of PLK4. Acetylates RRP9/U3-55K, a core subunit of the U3 snoRNP complex, impairing pre-rRNA processing. Acetylates MAPRE1/EB1, promoting dynamic kinetochore-microtubule interactions in early mitosis. Also acetylates spermidine. In Mus musculus (Mouse), this protein is Histone acetyltransferase KAT2B.